The primary structure comprises 274 residues: Rhamnulose-1-phosphate aldolase (274 aa).

Glu-117 is a catalytic residue. Residues His-141, His-143, and His-212 each coordinate Zn(2+).

This sequence belongs to the aldolase class II family. RhaD subfamily. Homotetramer. Zn(2+) is required as a cofactor.

It is found in the cytoplasm. The enzyme catalyses L-rhamnulose 1-phosphate = (S)-lactaldehyde + dihydroxyacetone phosphate. It participates in carbohydrate degradation; L-rhamnose degradation; glycerone phosphate from L-rhamnose: step 3/3. In terms of biological role, catalyzes the reversible cleavage of L-rhamnulose-1-phosphate to dihydroxyacetone phosphate (DHAP) and L-lactaldehyde. This chain is Rhamnulose-1-phosphate aldolase, found in Escherichia coli O45:K1 (strain S88 / ExPEC).